A 286-amino-acid chain; its full sequence is NAD(P)H azoreductase (286 aa).

Residues 6 to 11, arginine 31, and 136 to 141 each bind NADP(+); these read GGTGTI and GFFMQN.

The protein belongs to the NmrA-type oxidoreductase family. Azoreductase type 3 subfamily. As to quaternary structure, monomer.

Functionally, catalyzes the reductive cleavage of azo bond in aromatic azo compounds to the corresponding amines. Uses preferentially NADPH rather than NADH as an electron donor for its activity. The enzyme reductively cleaved Orange II and carboxy-Orange II, and can also reduce several sulfonated structural analogs, which carry a hydroxy group in the 2 position of the naphthol ring. In Xenophilus azovorans, this protein is NAD(P)H azoreductase (azoB).